We begin with the raw amino-acid sequence, 287 residues long: 2-dehydro-3-deoxyphosphooctonate aldolase (287 aa).

Belongs to the KdsA family.

It localises to the cytoplasm. The catalysed reaction is D-arabinose 5-phosphate + phosphoenolpyruvate + H2O = 3-deoxy-alpha-D-manno-2-octulosonate-8-phosphate + phosphate. The protein operates within carbohydrate biosynthesis; 3-deoxy-D-manno-octulosonate biosynthesis; 3-deoxy-D-manno-octulosonate from D-ribulose 5-phosphate: step 2/3. Its pathway is bacterial outer membrane biogenesis; lipopolysaccharide biosynthesis. The chain is 2-dehydro-3-deoxyphosphooctonate aldolase from Rhodopseudomonas palustris (strain TIE-1).